The sequence spans 348 residues: D-erythrose-4-phosphate dehydrogenase (348 aa).

NAD(+)-binding positions include 12 to 13 and R81; that span reads RI. Substrate-binding positions include 154–156, R200, 213–214, and R236; these read SCT and TK. C155 functions as the Nucleophile in the catalytic mechanism. N318 provides a ligand contact to NAD(+).

The protein belongs to the glyceraldehyde-3-phosphate dehydrogenase family. Epd subfamily. As to quaternary structure, homotetramer.

Its subcellular location is the cytoplasm. The catalysed reaction is D-erythrose 4-phosphate + NAD(+) + H2O = 4-phospho-D-erythronate + NADH + 2 H(+). It participates in cofactor biosynthesis; pyridoxine 5'-phosphate biosynthesis; pyridoxine 5'-phosphate from D-erythrose 4-phosphate: step 1/5. Functionally, catalyzes the NAD-dependent conversion of D-erythrose 4-phosphate to 4-phosphoerythronate. This chain is D-erythrose-4-phosphate dehydrogenase, found in Salmonella agona (strain SL483).